Here is a 480-residue protein sequence, read N- to C-terminus: Gasdermin-C3 (480 aa).

The interval 1–226 (MGYSFDRASK…TCVILPSATK (226 aa)) is triggers pyroptosis.

This sequence belongs to the gasdermin family. Homooligomer; homooligomeric ring-shaped pore complex containing 27-28 subunits when inserted in the membrane. In terms of processing, cleavage by CASP8 relieves autoinhibition by releasing the N-terminal moiety (Gasdermin-C3, N-terminal) that initiates pyroptosis. Post-translationally, palmitoylated.

It is found in the cytoplasm. Its subcellular location is the cytosol. The protein resides in the cell membrane. With respect to regulation, the full-length protein before cleavage is inactive: intramolecular interactions between N- and C-terminal domains mediate autoinhibition in the absence of activation signal. The intrinsic pyroptosis-inducing activity is carried by the released N-terminal moiety (Gasdermin-C3, N-terminal) following cleavage by caspase CASP8. This form constitutes the precursor of the pore-forming protein: upon cleavage, the released N-terminal moiety (Gasdermin-C3, N-terminal) binds to membranes and forms pores, triggering pyroptosis. Functionally, pore-forming protein that causes membrane permeabilization and pyroptosis. Produced by the cleavage of gasdermin-C3 by caspase CASP8 in response to death signals. After cleavage, moves to the plasma membrane where it strongly binds to membrane inner leaflet lipids. Homooligomerizes within the membrane and forms pores of 10-15 nanometers (nm) of inner diameter, triggering pyroptosis. The sequence is that of Gasdermin-C3 from Mus musculus (Mouse).